The following is a 128-amino-acid chain: Sulfurtransferase TusD (128 aa).

The active-site Cysteine persulfide intermediate is the C78.

Belongs to the DsrE/TusD family. In terms of assembly, heterohexamer, formed by a dimer of trimers. The hexameric TusBCD complex contains 2 copies each of TusB, TusC and TusD. The TusBCD complex interacts with TusE.

The protein resides in the cytoplasm. In terms of biological role, part of a sulfur-relay system required for 2-thiolation of 5-methylaminomethyl-2-thiouridine (mnm(5)s(2)U) at tRNA wobble positions. Accepts sulfur from TusA and transfers it in turn to TusE. The sequence is that of Sulfurtransferase TusD from Escherichia coli O139:H28 (strain E24377A / ETEC).